The primary structure comprises 492 residues: KAT8 regulatory NSL complex subunit 2 (492 aa).

Residue Lys-78 forms a Glycyl lysine isopeptide (Lys-Gly) (interchain with G-Cter in SUMO2) linkage. The segment at 127-182 (LGSQTPESSRSEASRILDEDSWSDGEQEPITVDQTWRGDPDSEADSIDSDQEDPLK) is disordered. At Thr-131 the chain carries Phosphothreonine. Basic and acidic residues predominate over residues 135–144 (SRSEASRILD). A phosphoserine mark is found at Ser-147, Ser-149, Ser-168, Ser-172, and Ser-175. The segment covering 167 to 178 (DSEADSIDSDQE) has biased composition (acidic residues). The segment at 308 to 364 (DVRCSNQSLPMTRHCLTHICQDTNQVLFKCCQGSEEVPCNKPVPVSLSEDPCCPLHF) is required for interaction with other NSL complex members. Positions 455–492 (AGDGCRSQGSRNSEKGSAPLSQSGLATANGKPEPTSIS) are disordered.

In terms of assembly, component of the NSL complex at least composed of KAT8/MOF, KANSL1, KANSL2, KANSL3, MCRS1, PHF20, OGT1/OGT, WDR5 and HCFC1.

The protein resides in the nucleus. The protein localises to the mitochondrion. Its function is as follows. Non-catalytic component of the NSL histone acetyltransferase complex, a multiprotein complex that mediates histone H4 acetylation at 'Lys-5'- and 'Lys-8' (H4K5ac and H4K8ac) at transcription start sites and promotes transcription initiation. Required for NSL complex stability and for transcription of intraciliary transport genes in both ciliated and non-ciliated cells by regulating histone H4 acetylation at 'Lys-5'- and 'Lys-12' (H4K5ac and H4K12ac). This is necessary for cilium assembly in ciliated cells and for organization of the microtubule cytoskeleton in non-ciliated cells. Required within the NSL complex to maintain nuclear architecture stability by promoting KAT8-mediated acetylation of lamin LMNA. This is KAT8 regulatory NSL complex subunit 2 (KANSL2) from Pongo abelii (Sumatran orangutan).